The primary structure comprises 507 residues: Peroxisomal catalase (507 aa).

Active-site residues include His-65 and Asn-138. Tyr-348 lines the heme pocket. The Microbody targeting signal signature appears at 505–507 (SKI).

The protein belongs to the catalase family. Homotetramer. It depends on heme as a cofactor.

It localises to the peroxisome matrix. It carries out the reaction 2 H2O2 = O2 + 2 H2O. Its function is as follows. Catalyzes the degradation of hydrogen peroxide (H(2)O(2)) generated by peroxisomal oxidases to water and oxygen, thereby protecting cells from the toxic effects of hydrogen peroxide. The chain is Peroxisomal catalase (PXP9) from Pichia angusta (Yeast).